Reading from the N-terminus, the 128-residue chain is Secreted RxLR effector protein 57 (128 aa).

The first 31 residues, 1–31 (MHRKRLRVVLSATLLDLITCVQLMLDPLVRS), serve as a signal peptide directing secretion. The short motif at 58 to 61 (RILR) is the RxLR element.

This sequence belongs to the RxLR effector family.

The protein resides in the secreted. Its subcellular location is the host nucleus. The protein localises to the host cytoplasm. In terms of biological role, secreted effector that completely suppresses the host cell death induced by cell death-inducing proteins. This chain is Secreted RxLR effector protein 57, found in Plasmopara viticola (Downy mildew of grapevine).